The chain runs to 234 residues: Probable transcriptional regulatory protein TcrX (234 aa).

Residues 10-124 (TVLVVDDEPV…EVVLRLRALL (115 aa)) enclose the Response regulatory domain. A 4-aspartylphosphate modification is found at Asp-59. Residues 135-232 (GAQLVVGDLV…LRGAGYVLKP (98 aa)) constitute a DNA-binding region (ompR/PhoB-type).

Phosphorylated by TcrY.

The protein localises to the cytoplasm. Functionally, member of the two-component regulatory system TcrY/TcrX. The chain is Probable transcriptional regulatory protein TcrX (tcrX) from Mycobacterium tuberculosis (strain ATCC 25618 / H37Rv).